The primary structure comprises 1144 residues: Nitric oxide synthase, inducible (1144 aa).

The short motif at 23-27 (DINNN) is the DINNN-motif; mediates interaction with SPSB1, SPSB2 and SPSB4 element. A disordered region spans residues 37–59 (SPTIQDDPKSHQNGSPQLLTGTA). Residues 47–59 (HQNGSPQLLTGTA) are compositionally biased toward polar residues. Residues cysteine 104 and cysteine 109 each coordinate Zn(2+). Serine 112 provides a ligand contact to (6R)-L-erythro-5,6,7,8-tetrahydrobiopterin. Cysteine 194 provides a ligand contact to heme b. L-arginine contacts are provided by glutamine 257, tryptophan 366, tyrosine 367, and glutamate 371. The (6R)-L-erythro-5,6,7,8-tetrahydrobiopterin site is built by arginine 375, isoleucine 456, tryptophan 457, and phenylalanine 470. Tyrosine 485 contacts heme b. The tract at residues 509–529 (FRVLVKVVFFASMLMRKVMAS) is calmodulin-binding. The region spanning 533-671 (ATVLFATETG…AFRSWAVQTF (139 aa)) is the Flavodoxin-like domain. Residues threonine 539, glutamate 540, threonine 541, lysine 543, and serine 544 each contribute to the FMN site. Tyrosine 569 carries the post-translational modification Phosphotyrosine. Residues serine 585, threonine 586, serine 622, cysteine 629, glutamate 655, and glutamine 659 each contribute to the FMN site. An FAD-binding FR-type domain is found at 724 to 964 (KNVFTMRLKS…VRSVSGFQLP (241 aa)). NADP(+) is bound at residue arginine 744. Residues histidine 766, arginine 900, tyrosine 902, serine 903, threonine 918, and alanine 920 each coordinate FAD. Threonine 923 contributes to the NADP(+) binding site. Positions 924, 937, 938, and 939 each coordinate FAD. Positions 978, 1011, 1040, 1041, 1047, 1049, 1051, and 1084 each coordinate NADP(+).

The protein belongs to the NOS family. Homodimer. Interacts with NHERF1. Interacts with GAPDH. Interacts with S100A8 and S100A9 to form the iNOS-S100A8/9 transnitrosylase complex. Interacts with SPSB1, SPSB2 and SPSB4. Interacts with ELOC and CUL5 in the presence of SPSB1 or SPSB2 or SPSB4. Forms a complex with ASL, ASS1 and HSP90AA1; the complex regulates cell-autonomous L-arginine synthesis and citrulline recycling while channeling extracellular L-arginine to nitric oxide synthesis pathway. It depends on heme b as a cofactor. Requires FAD as cofactor. The cofactor is FMN. (6R)-L-erythro-5,6,7,8-tetrahydrobiopterin is required as a cofactor. Post-translationally, polyubiquitinated; mediated by SPSB1, SPSB2 and SPSB4, leading to proteasomal degradation. As to expression, macrophages.

It is found in the cytoplasm. The protein localises to the cytosol. It carries out the reaction 2 L-arginine + 3 NADPH + 4 O2 + H(+) = 2 L-citrulline + 2 nitric oxide + 3 NADP(+) + 4 H2O. Not stimulated by calcium/calmodulin. Aspirin inhibits expression and function of this enzyme and effects may be exerted at the level of translational/post-translational modification and directly on the catalytic activity. In terms of biological role, produces nitric oxide (NO) which is a messenger molecule with diverse functions throughout the body. In macrophages, NO mediates tumoricidal and bactericidal actions. Also has nitrosylase activity and mediates cysteine S-nitrosylation of cytoplasmic target proteins such PTGS2/COX2. As component of the iNOS-S100A8/9 transnitrosylase complex involved in the selective inflammatory stimulus-dependent S-nitrosylation of GAPDH implicated in regulation of the GAIT complex activity and probably multiple targets including ANXA5, EZR, MSN and VIM. Involved in inflammation, enhances the synthesis of pro-inflammatory mediators such as IL6 and IL8. The chain is Nitric oxide synthase, inducible (Nos2) from Mus musculus (Mouse).